The primary structure comprises 854 residues: A-kinase anchor protein 4 (854 aa).

A propeptide spanning residues Met1–Asn188 is cleaved from the precursor. Residues Ser96, Ser130, Ser190, Ser213, Ser226, and Ser272 each carry the phosphoserine modification. A disordered region spans residues Asn184 to Ser207. The segment at Phe219–Ala232 is PKA-RI and PKA-RII subunit binding domain. Residues Arg287–Lys323 form a disordered region. The span at Gly288 to Gly297 shows a compositional bias: basic and acidic residues. Ser300 bears the Phosphoserine mark. Tyr303 is subject to Phosphotyrosine. Phosphoserine occurs at positions 304 and 307. Residues Lys311–Lys323 are compositionally biased toward basic and acidic residues. Positions Tyr336 to Met345 are PKA-RI-alpha subunit binding domain. Residues Ser342, Ser432, Ser443, Ser445, Ser447, Ser450, Ser464, and Ser492 each carry the phosphoserine modification. At Thr506 the chain carries Phosphothreonine. Residues Ser536, Ser581, Ser627, and Ser703 each carry the phosphoserine modification.

This sequence belongs to the AKAP110 family. In terms of assembly, interacts with PRKAR1A and PRKAR2A. Interacts with ENO4. Interacts with QRICH2. Phosphorylated by STK33 during sperm flagella assembly. Testis specific; only expressed in round spermatids.

The protein localises to the cell projection. Its subcellular location is the cilium. It localises to the flagellum. Major structural component of sperm fibrous sheath. Plays a role in sperm motility. This is A-kinase anchor protein 4 from Homo sapiens (Human).